Consider the following 662-residue polypeptide: Fructose-1,6-bisphosphatase class 3 (662 aa).

The protein belongs to the FBPase class 3 family. The cofactor is Mn(2+).

It catalyses the reaction beta-D-fructose 1,6-bisphosphate + H2O = beta-D-fructose 6-phosphate + phosphate. Its pathway is carbohydrate biosynthesis; gluconeogenesis. The sequence is that of Fructose-1,6-bisphosphatase class 3 from Clostridium tetani (strain Massachusetts / E88).